We begin with the raw amino-acid sequence, 182 residues long: Ferredoxin-thioredoxin reductase subunit A1, chloroplastic (182 aa).

The transit peptide at 1–81 directs the protein to the chloroplast; it reads MSSQIALSPA…VAIKSADSIN (81 aa).

This sequence belongs to the ferredoxin thioredoxin reductase alpha subunit family. As to quaternary structure, heterodimer of subunit A (variable subunit) and subunit B (catalytic subunit). Heterodimeric FTR forms a complex with ferredoxin and thioredoxin.

Its subcellular location is the plastid. It is found in the chloroplast. Its function is as follows. Variable subunit of the ferredoxin-thioredoxin reductase (FTR), which catalyzes the two-electron reduction of thioredoxins by the electrons provided by reduced ferredoxin. This chain is Ferredoxin-thioredoxin reductase subunit A1, chloroplastic, found in Arabidopsis thaliana (Mouse-ear cress).